A 2112-amino-acid chain; its full sequence is Phenolphthiocerol synthesis polyketide synthase type I Pks15/1 (2112 aa).

The region spanning 46 to 469 (TEPVAVVGIG…GTNAHLILEE (424 aa)) is the Ketosynthase family 3 (KS3) domain. Catalysis depends on for beta-ketoacyl synthase activity residues C216, H351, and H391. The segment at 579–893 (TVVVFPGQGA…GQVFTTGVPV (315 aa)) is acyltransferase. S670 acts as the For acyltransferase activity in catalysis. Positions 941–1063 (HALLGAVVER…GMLGVAAAET (123 aa)) are N-terminal hotdog fold. Positions 941 to 1101 (HALLGAVVER…YAYGPAFQGL (161 aa)) are dehydratase. One can recognise a PKS/mFAS DH domain in the interval 941–1215 (HALLGAVVER…TRPITAEQLR (275 aa)). The active-site Proton acceptor; for dehydratase activity is H973. The segment at 1075-1215 (AESVDISDGY…TRPITAEQLR (141 aa)) is C-terminal hotdog fold. D1136 acts as the Proton donor; for dehydratase activity in catalysis. Positions 1406-1711 (GTLEDLVIQP…QARHIGKVVL (306 aa)) are enoylreductase. NADP(+) contacts are provided by residues 1536-1553 (VLIH…VQLA) and 1725-1740 (TVVI…GVLA). Residues 1724–1905 (GTVVITGATG…SLAWGLWEQP (182 aa)) form a beta-ketoacyl reductase region. One can recognise a Carrier domain in the interval 2010–2085 (ELLVGLVCLQ…AVAEYVAQQM (76 aa)). S2045 is modified (O-(pantetheine 4'-phosphoryl)serine). Polar residues predominate over residues 2084–2100 (QMSGSRPTESGDPTSQV). The interval 2084–2112 (QMSGSRPTESGDPTSQVVEPAAAEVSVHA) is disordered.

It belongs to the thiolase-like superfamily. Beta-ketoacyl-ACP synthases family. It depends on pantetheine 4'-phosphate as a cofactor.

The catalysed reaction is a fatty acyl-[ACP] + malonyl-[ACP] + H(+) = a 3-oxoacyl-[ACP] + holo-[ACP] + CO2. It functions in the pathway lipid metabolism; fatty acid biosynthesis. Functionally, catalyzes the elongation by iterative transfer of p-hydroxybenzoyl group from FadD22 (pHBA-S-FAdD22) to form p-hydroxyphenylalkanoate (pHPA) intermediates during phenolphthiocerol (PPOL) biosynthesis. PPOL is an important intermediate in the biosynthesis of phenolic glycolipid (mycosid B). The polypeptide is Phenolphthiocerol synthesis polyketide synthase type I Pks15/1 (pks15/1) (Mycobacterium bovis (strain ATCC BAA-935 / AF2122/97)).